An 814-amino-acid chain; its full sequence is Rap guanine nucleotide exchange factor 5 (814 aa).

Positions 43-118 constitute a DEP domain; it reads LQAADLVKDR…DNYVFYQFSS (76 aa). Positions 301-434 constitute an N-terminal Ras-GEF domain; sequence ARYVVVSGTP…ELKEFQKILG (134 aa). The 236-residue stretch at 578-813 folds into the Ras-GEF domain; the sequence is NTWDLALELM…FELSHRLEPR (236 aa).

Its subcellular location is the nucleus. Guanine nucleotide exchange factor (GEF) for RAP1A, RAP2A and MRAS/M-Ras-GTP. Its association with MRAS inhibits Rap1 activation. This chain is Rap guanine nucleotide exchange factor 5 (Rapgef5), found in Mus musculus (Mouse).